The following is a 245-amino-acid chain: tRNA1(Val) (adenine(37)-N6)-methyltransferase (245 aa).

Belongs to the methyltransferase superfamily. tRNA (adenine-N(6)-)-methyltransferase family.

The protein resides in the cytoplasm. The catalysed reaction is adenosine(37) in tRNA1(Val) + S-adenosyl-L-methionine = N(6)-methyladenosine(37) in tRNA1(Val) + S-adenosyl-L-homocysteine + H(+). Functionally, specifically methylates the adenine in position 37 of tRNA(1)(Val) (anticodon cmo5UAC). This chain is tRNA1(Val) (adenine(37)-N6)-methyltransferase, found in Escherichia fergusonii (strain ATCC 35469 / DSM 13698 / CCUG 18766 / IAM 14443 / JCM 21226 / LMG 7866 / NBRC 102419 / NCTC 12128 / CDC 0568-73).